A 404-amino-acid chain; its full sequence is Pyruvate-flavodoxin oxidoreductase (404 aa).

Belongs to the pyruvate:ferredoxin/flavodoxin oxidoreductase family.

The catalysed reaction is oxidized [flavodoxin] + pyruvate + CoA + 2 H(+) = reduced [flavodoxin] + acetyl-CoA + CO2. Oxidoreductase required for the transfer of electrons from pyruvate to flavodoxin, which reduces nitrogenase. The chain is Pyruvate-flavodoxin oxidoreductase (nifJ) from Nostoc sp. (strain ATCC 29151 / PCC 7119) (Anabaena sp.).